The sequence spans 449 residues: Procollagen C-endopeptidase enhancer 1 (449 aa).

Residues 1 to 25 (MLPAATASLLGPLLTACALLPFAQG) form the signal peptide. Asparagine 29 carries N-linked (GlcNAc...) asparagine glycosylation. 7 disulfide bridges follow: cysteine 37–cysteine 63, cysteine 90–cysteine 112, cysteine 159–cysteine 186, cysteine 213–cysteine 236, cysteine 318–cysteine 386, cysteine 322–cysteine 389, and cysteine 333–cysteine 437. 2 CUB domains span residues 37 to 149 (CGGD…YSGR) and 159 to 273 (CGGR…YKTL). Position 50 is a phosphoserine (serine 50). A disordered region spans residues 271-321 (KTLPRGTAKEGQGPGPKRGTEPKVKLPPKSQPPEKTEESPSAPDAPTCPKQ). One can recognise an NTR domain in the interval 318–437 (CPKQCRRTGT…ILTNLSKRKC (120 aa)). Asparagine 431 carries an N-linked (GlcNAc...) asparagine glycan.

As to quaternary structure, interacts with EFEMP2. In terms of processing, C-terminally processed at multiple positions.

It is found in the secreted. Binds to the C-terminal propeptide of type I procollagen and enhances procollagen C-proteinase activity. In terms of biological role, C-terminal processed part of PCPE (CT-PCPE) may have an metalloproteinase inhibitory activity. This chain is Procollagen C-endopeptidase enhancer 1 (PCOLCE), found in Homo sapiens (Human).